The sequence spans 478 residues: MKILFCSSEAFPFSKTGGLADMAYFLPKSINVLGHEIVVITPYYEGIKKHHETMTYLGTKTIYMGHGEVVVNYYKLVYESITYIFVQNMHYFEREGLYGYHDDAERFAAFSYAILESLDIIEFYPDILHINDWQTSMIPYLLDKHYRHQSFNYFRIHTLLTIHNLQYQGDFDKDVAKFFNTDFDYTYIHFDRVNYLKAGIERATKINTVSPTYSKEVMTREYGFSLDGSLQNRINDFSGILNGIDDQNTFNPKTDKYLIKTYSVSNHKSGKNLNKQFLLEHFGLDKNLDEPLIAYVGRLADQKGLGLMEYCLEEVIQYSNAKFILMGSGDKAYEDYFRYLTYKYPNKVGNYIGFNEKIAHIIYGASDIFMMPSRFEPCGLGQMIAMKYGSLPIVRETGGLKDSVIPYNKYTQEGTGFSFKNYDSYDLKEKLFEAINLYNEDKKTWQILVKQAMKSDFGLNQMARAYEELYKNIIGEKI.

Lys-15 is a binding site for ADP-alpha-D-glucose.

This sequence belongs to the glycosyltransferase 1 family. Bacterial/plant glycogen synthase subfamily.

It carries out the reaction [(1-&gt;4)-alpha-D-glucosyl](n) + ADP-alpha-D-glucose = [(1-&gt;4)-alpha-D-glucosyl](n+1) + ADP + H(+). It functions in the pathway glycan biosynthesis; glycogen biosynthesis. Synthesizes alpha-1,4-glucan chains using ADP-glucose. The protein is Glycogen synthase of Acholeplasma laidlawii (strain PG-8A).